The chain runs to 1338 residues: Aldehyde oxidase 1 (1338 aa).

The 2Fe-2S ferredoxin-type domain occupies 5–92 (SELLFYVNGR…GTAVTTVEGI (88 aa)). Mo-molybdopterin is bound by residues Gln113 and Cys151. An FAD-binding PCMH-type domain is found at 236-421 (FGSERMMWFS…VSVNIPYSRK (186 aa)). Residues 264-271 (VIMGNTSV), Ala345, Ser354, His358, Asp367, and Leu411 each bind FAD. Mo-molybdopterin-binding positions include 806–807 (AF) and Met1047. A Phosphoserine modification is found at Ser1068. Residues 1088-1091 (GSVV), Gln1203, and Leu1268 each bind Mo-molybdopterin. Glu1270 (proton acceptor; for azaheterocycle hydroxylase activity) is an active-site residue.

Belongs to the xanthine dehydrogenase family. In terms of assembly, homodimer. [2Fe-2S] cluster is required as a cofactor. Requires FAD as cofactor. Mo-molybdopterin serves as cofactor. Detected at high levels in liver, also detected in lung, kidney, lacrimal gland and olfactory mucosa.

Its subcellular location is the cytoplasm. The catalysed reaction is an aldehyde + O2 + H2O = a carboxylate + H2O2 + H(+). It carries out the reaction retinal + O2 + H2O = retinoate + H2O2 + H(+). Oxidase with broad substrate specificity, oxidizing aromatic azaheterocycles, such as N1-methylnicotinamide, N-methylphthalazinium and phthalazine, as well as aldehydes, such as benzaldehyde, retinal, pyridoxal, and vanillin. Plays a key role in the metabolism of xenobiotics and drugs containing aromatic azaheterocyclic substituents. Participates in the bioactivation of prodrugs such as famciclovir, catalyzing the oxidation step from 6-deoxypenciclovir to penciclovir, which is a potent antiviral agent. Is probably involved in the regulation of reactive oxygen species homeostasis. May be a prominent source of superoxide generation via the one-electron reduction of molecular oxygen. May also catalyze nitric oxide (NO) production via the reduction of nitrite to NO with NADH or aldehyde as electron donor. May play a role in adipogenesis. This is Aldehyde oxidase 1 (AOX1) from Macaca fascicularis (Crab-eating macaque).